A 154-amino-acid chain; its full sequence is Superoxide dismutase [Cu-Zn] (154 aa).

Positions 47, 49, and 64 each coordinate Cu cation. A disulfide bridge links Cys58 with Cys147. Residues His64, His72, His81, and Asp84 each coordinate Zn(2+). His121 serves as a coordination point for Cu cation. The segment covering 124-137 (TDDLGRGDSEESKK) has biased composition (basic and acidic residues). The interval 124–144 (TDDLGRGDSEESKKTGNAGAR) is disordered. Arg144 contacts substrate.

The protein belongs to the Cu-Zn superoxide dismutase family. As to quaternary structure, homodimer. Cu cation serves as cofactor. Zn(2+) is required as a cofactor.

The protein localises to the cytoplasm. The catalysed reaction is 2 superoxide + 2 H(+) = H2O2 + O2. Functionally, destroys radicals which are normally produced within the cells and which are toxic to biological systems. The protein is Superoxide dismutase [Cu-Zn] (sodA) of Emericella nidulans (strain FGSC A4 / ATCC 38163 / CBS 112.46 / NRRL 194 / M139) (Aspergillus nidulans).